The sequence spans 381 residues: Glycerate 2-kinase (381 aa).

The protein belongs to the glycerate kinase type-1 family.

It carries out the reaction (R)-glycerate + ATP = (2R)-2-phosphoglycerate + ADP + H(+). Functionally, catalyzes the transfer of the phosphate group from adenosine triphosphate (ATP) to (R)-glycerate to form (2R)-2-phosphoglycerate, an enzymatic step in (L)-glucarate/galactarate catabolic pathway. The polypeptide is Glycerate 2-kinase (garK) (Escherichia coli (strain K12)).